The chain runs to 709 residues: Phosphoribosylformylglycinamidine synthase subunit PurL (709 aa).

Residue H36 is part of the active site. ATP is bound by residues Y39 and K80. E82 serves as a coordination point for Mg(2+). Substrate contacts are provided by residues 83 to 86 (SHNH) and R105. H84 (proton acceptor) is an active-site residue. Mg(2+) is bound at residue D106. Q226 lines the substrate pocket. A Mg(2+)-binding site is contributed by D252. A substrate-binding site is contributed by 294–296 (ETQ). ATP is bound by residues D470 and G507. S510 serves as a coordination point for substrate.

It belongs to the FGAMS family. Monomer. Part of the FGAM synthase complex composed of 1 PurL, 1 PurQ and 2 PurS subunits.

Its subcellular location is the cytoplasm. The enzyme catalyses N(2)-formyl-N(1)-(5-phospho-beta-D-ribosyl)glycinamide + L-glutamine + ATP + H2O = 2-formamido-N(1)-(5-O-phospho-beta-D-ribosyl)acetamidine + L-glutamate + ADP + phosphate + H(+). It functions in the pathway purine metabolism; IMP biosynthesis via de novo pathway; 5-amino-1-(5-phospho-D-ribosyl)imidazole from N(2)-formyl-N(1)-(5-phospho-D-ribosyl)glycinamide: step 1/2. In terms of biological role, part of the phosphoribosylformylglycinamidine synthase complex involved in the purines biosynthetic pathway. Catalyzes the ATP-dependent conversion of formylglycinamide ribonucleotide (FGAR) and glutamine to yield formylglycinamidine ribonucleotide (FGAM) and glutamate. The FGAM synthase complex is composed of three subunits. PurQ produces an ammonia molecule by converting glutamine to glutamate. PurL transfers the ammonia molecule to FGAR to form FGAM in an ATP-dependent manner. PurS interacts with PurQ and PurL and is thought to assist in the transfer of the ammonia molecule from PurQ to PurL. This is Phosphoribosylformylglycinamidine synthase subunit PurL from Saccharolobus islandicus (strain M.14.25 / Kamchatka #1) (Sulfolobus islandicus).